Reading from the N-terminus, the 287-residue chain is MVINGIAYKALVRFSVIDSTDLVKTATKKHNLSPITSVALGRLLTGIALMVPWLSKNDTLTYIIEGSNKIKYIAAQSKNNGNVRGYILPKIVDTITNEKGKFDLKSAIGNGTLKVVRDLGLKTPYVTPIKLISGEIAEDLTYYFTISEQIPSAIALGVLVDKNGIKRAGGIIIQILDQSLPKKDITEIEKKFKEITPITNFLEKHTPIDALKHIFGKKIEKTETHEINFRCSCSHQKALESLKLLKVDELKEIIIKNEIVEVSCKWCSTTYKIKPEEVKKILEEKNK.

2 disulfide bridges follow: Cys-231–Cys-233 and Cys-264–Cys-267.

It belongs to the HSP33 family. Post-translationally, under oxidizing conditions two disulfide bonds are formed involving the reactive cysteines. Under reducing conditions zinc is bound to the reactive cysteines and the protein is inactive.

It is found in the cytoplasm. In terms of biological role, redox regulated molecular chaperone. Protects both thermally unfolding and oxidatively damaged proteins from irreversible aggregation. Plays an important role in the bacterial defense system toward oxidative stress. This is 33 kDa chaperonin from Thermosipho melanesiensis (strain DSM 12029 / CIP 104789 / BI429).